Here is a 382-residue protein sequence, read N- to C-terminus: Mannitol-1-phosphate 5-dehydrogenase (382 aa).

NAD(+) is bound at residue 3–14 (ALHFGAGNIGRG). Lys-269 carries the N6-acetyllysine modification.

This sequence belongs to the mannitol dehydrogenase family.

It carries out the reaction D-mannitol 1-phosphate + NAD(+) = beta-D-fructose 6-phosphate + NADH + H(+). The protein is Mannitol-1-phosphate 5-dehydrogenase of Escherichia coli (strain K12 / MC4100 / BW2952).